We begin with the raw amino-acid sequence, 159 residues long: NADH-quinone oxidoreductase subunit B (159 aa).

Residues Cys36, Cys37, Cys102, and Cys132 each coordinate [4Fe-4S] cluster.

This sequence belongs to the complex I 20 kDa subunit family. As to quaternary structure, NDH-1 is composed of 14 different subunits. Subunits NuoB, C, D, E, F, and G constitute the peripheral sector of the complex. The cofactor is [4Fe-4S] cluster.

The protein resides in the cell inner membrane. The enzyme catalyses a quinone + NADH + 5 H(+)(in) = a quinol + NAD(+) + 4 H(+)(out). NDH-1 shuttles electrons from NADH, via FMN and iron-sulfur (Fe-S) centers, to quinones in the respiratory chain. Couples the redox reaction to proton translocation (for every two electrons transferred, four hydrogen ions are translocated across the cytoplasmic membrane), and thus conserves the redox energy in a proton gradient. The polypeptide is NADH-quinone oxidoreductase subunit B (Albidiferax ferrireducens (strain ATCC BAA-621 / DSM 15236 / T118) (Rhodoferax ferrireducens)).